The sequence spans 119 residues: Protein phosphatase EYA4 (119 aa).

The protein belongs to the HAD-like hydrolase superfamily. EYA family. Mg(2+) serves as cofactor.

It localises to the cytoplasm. Its subcellular location is the nucleus. The catalysed reaction is O-phospho-L-tyrosyl-[protein] + H2O = L-tyrosyl-[protein] + phosphate. Tyrosine phosphatase that specifically dephosphorylates 'Tyr-142' of histone H2AX (H2AXY142ph). 'Tyr-142' phosphorylation of histone H2AX plays a central role in DNA repair and acts as a mark that distinguishes between apoptotic and repair responses to genotoxic stress. Promotes efficient DNA repair by dephosphorylating H2AX, promoting the recruitment of DNA repair complexes containing MDC1. Its function as histone phosphatase probably explains its role in transcription regulation during organogenesis. May be involved in development of the eye. The sequence is that of Protein phosphatase EYA4 (EYA4) from Gallus gallus (Chicken).